A 526-amino-acid chain; its full sequence is Acetyl-CoA hydrolase (526 aa).

Residue 277–281 (GIGNI) coordinates CoA. The active-site 5-glutamyl coenzyme A thioester intermediate is glutamate 302. Positions 392 and 396 each coordinate CoA.

This sequence belongs to the acetyl-CoA hydrolase/transferase family.

It is found in the cytoplasm. The enzyme catalyses acetyl-CoA + H2O = acetate + CoA + H(+). Its function is as follows. Presumably involved in regulating the intracellular acetyl-CoA pool for fatty acid and cholesterol synthesis and fatty acid oxidation. This is Acetyl-CoA hydrolase (ACH1) from Candida glabrata (strain ATCC 2001 / BCRC 20586 / JCM 3761 / NBRC 0622 / NRRL Y-65 / CBS 138) (Yeast).